The chain runs to 319 residues: Acetyl-coenzyme A carboxylase carboxyl transferase subunit alpha (319 aa).

Residues 35–296 (NIDEEVHRLR…KTQLLADLAD (262 aa)) form the CoA carboxyltransferase C-terminal domain.

Belongs to the AccA family. Acetyl-CoA carboxylase is a heterohexamer composed of biotin carboxyl carrier protein (AccB), biotin carboxylase (AccC) and two subunits each of ACCase subunit alpha (AccA) and ACCase subunit beta (AccD).

It localises to the cytoplasm. The enzyme catalyses N(6)-carboxybiotinyl-L-lysyl-[protein] + acetyl-CoA = N(6)-biotinyl-L-lysyl-[protein] + malonyl-CoA. The protein operates within lipid metabolism; malonyl-CoA biosynthesis; malonyl-CoA from acetyl-CoA: step 1/1. Its function is as follows. Component of the acetyl coenzyme A carboxylase (ACC) complex. First, biotin carboxylase catalyzes the carboxylation of biotin on its carrier protein (BCCP) and then the CO(2) group is transferred by the carboxyltransferase to acetyl-CoA to form malonyl-CoA. The polypeptide is Acetyl-coenzyme A carboxylase carboxyl transferase subunit alpha (Cronobacter sakazakii (strain ATCC BAA-894) (Enterobacter sakazakii)).